We begin with the raw amino-acid sequence, 81 residues long: Small ribosomal subunit protein bS16 (81 aa).

Belongs to the bacterial ribosomal protein bS16 family.

The sequence is that of Small ribosomal subunit protein bS16 from Neisseria meningitidis serogroup C (strain 053442).